Here is a 269-residue protein sequence, read N- to C-terminus: Shikimate dehydrogenase (NADP(+)) (269 aa).

Residues 14-16 (TLS) and Thr-60 each bind shikimate. Lys-64 functions as the Proton acceptor in the catalytic mechanism. Asp-76 is an NADP(+) binding site. Residues Asn-85 and Asp-100 each coordinate shikimate. Residues 122–126 (GAGGA) and Met-208 each bind NADP(+). Tyr-210 is a shikimate binding site. Gly-232 lines the NADP(+) pocket.

It belongs to the shikimate dehydrogenase family. As to quaternary structure, homodimer.

It carries out the reaction shikimate + NADP(+) = 3-dehydroshikimate + NADPH + H(+). The protein operates within metabolic intermediate biosynthesis; chorismate biosynthesis; chorismate from D-erythrose 4-phosphate and phosphoenolpyruvate: step 4/7. Functionally, involved in the biosynthesis of the chorismate, which leads to the biosynthesis of aromatic amino acids. Catalyzes the reversible NADPH linked reduction of 3-dehydroshikimate (DHSA) to yield shikimate (SA). The chain is Shikimate dehydrogenase (NADP(+)) from Caldivirga maquilingensis (strain ATCC 700844 / DSM 13496 / JCM 10307 / IC-167).